The chain runs to 337 residues: Transcription initiation factor IIB (337 aa).

The TFIIB-type zinc finger occupies 36–68 (SVQSVCPECGSRQLVHDYERAELVCQNCGLVLD). Positions 41, 44, 60, and 63 each coordinate Zn(2+). 2 consecutive repeat copies span residues 154–237 (SELD…SREL) and 248–329 (DYVP…ELAE).

This sequence belongs to the TFIIB family.

Stabilizes TBP binding to an archaeal box-A promoter. Also responsible for recruiting RNA polymerase II to the pre-initiation complex (DNA-TBP-TFIIB). The sequence is that of Transcription initiation factor IIB from Methanoculleus marisnigri (strain ATCC 35101 / DSM 1498 / JR1).